A 2426-amino-acid polypeptide reads, in one-letter code: Protein SON (2426 aa).

Position 2 is an N-acetylalanine (alanine 2). At lysine 16 the chain carries N6-acetyllysine. Polar residues predominate over residues 24–42 (LSSGRNEGQLNGETNTPIE). Residues 24–56 (LSSGRNEGQLNGETNTPIEGNQAGDAAASARSL) are disordered. A Glycyl lysine isopeptide (Lys-Gly) (interchain with G-Cter in SUMO2) cross-link involves residue lysine 64. Positions 77–88 (LRYKPDLKEGSR) are enriched in basic and acidic residues. The disordered stretch occupies residues 77 to 155 (LRYKPDLKEG…GNIDLESDSF (79 aa)). Position 94 is a phosphoserine (serine 94). Over residues 106–130 (KKSKKHKKHKNKKKKKKKEKEKKYK) the composition is skewed to basic residues. Residues 131-146 (RQPEESESKTKSHDDG) show a composition bias toward basic and acidic residues. Serine 142, serine 152, serine 154, serine 160, and serine 283 each carry phosphoserine. N6-acetyllysine is present on lysine 288. Positions 305-328 (TLVVSSETPTEVYPEPSTSTTMDF) are disordered. Residue threonine 400 is modified to Phosphothreonine. The disordered stretch occupies residues 406-442 (PGPSATPVPELPGPLSTPVPELPGPPATAVPELPGPS). A compositionally biased stretch (pro residues) spans 409–442 (SATPVPELPGPLSTPVPELPGPPATAVPELPGPS). A 17 X 10 AA tandem repeats of L-A-[ST]-[NSG]-[TS]-MDSQM region spans residues 726–895 (LASNTMDSQM…LASGTMDAQM (170 aa)). The interval 912–988 (DPYRLAQDPY…IAPRPYRLAP (77 aa)) is 11 X 7 AA tandem repeats of [DR]-P-Y-R-[LI][AG][QHP]. Position 950 is an omega-N-methylarginine (arginine 950). A Phosphothreonine modification is found at threonine 959. Serine 998 carries the phosphoserine modification. 14 tandem repeats follow at residues 1006-1011 (ERSMMS), 1014-1019 (ERSMMS), 1021-1026 (ERSMMS), 1030-1035 (ERSMMS), 1038-1043 (ERSMMS), 1046-1051 (ERSMMS), 1055-1060 (ERSMMS), 1063-1068 (ERSMMS), 1071-1076 (ERSMMS), 1080-1085 (DRSMMS), 1089-1094 (DRSMMS), 1100-1105 (DRSMMS), 1111-1116 (DRSMMS), and 1121-1126 (DRSMMS). Residues 1006-1126 (ERSMMSSYER…SYTADRSMMS (121 aa)) are 14 X 6 AA repeats of [ED]-R-S-M-M-S. The residue at position 1007 (arginine 1007) is an Asymmetric dimethylarginine. Arginine 1022 carries the post-translational modification Asymmetric dimethylarginine. Phosphoserine is present on residues serine 1035 and serine 1043. Serine 1060 and serine 1068 each carry phosphoserine. Serine 1082 carries the post-translational modification Phosphoserine. Residues 1144-1236 (YMVPPLPPEE…PTDYSVSASD (93 aa)) are disordered. Positions 1147-1179 (PPLPPEEPPTMPPLPPEEPPMTPPLPPEEPPEG) are 3 X 11 AA tandem repats of P-P-L-P-P-E-E-P-P-[TME]-[MTG]. Residues 1147-1180 (PPLPPEEPPTMPPLPPEEPPMTPPLPPEEPPEGP) are compositionally biased toward pro residues. The span at 1186–1196 (QSALTAENTWP) shows a compositional bias: polar residues. The span at 1198–1224 (EVPSSPSEESVSQPEPPVSQSEISEPS) shows a compositional bias: low complexity. The 4 X 8 AA tandem repeats of V-L-E-SS-[AVT]-VT stretch occupies residues 1359 to 1390 (VLESSAVTVLESSTVTVLESSTVTVLEPSVVT). Phosphoserine occurs at positions 1556 and 1651. Positions 1645 to 1722 (TSPSGGSEAD…KETLPDSGFS (78 aa)) are disordered. The span at 1677-1689 (KDTEEPLPVKESD) shows a compositional bias: basic and acidic residues. Residues serine 1697, serine 1701, serine 1747, serine 1759, serine 1766, serine 1769, serine 1782, and serine 1783 each carry the phosphoserine modification. Positions 1754–2054 (GPLLASDVGR…RSPKRLTDLD (301 aa)) are disordered. 3 stretches are compositionally biased toward basic and acidic residues: residues 1790-1801 (YEIFVKVKDTHE), 1809-1822 (RDKG…DSSL), and 1830-1845 (KSSE…ESRS). 2 stretches are compositionally biased toward basic residues: residues 1846 to 1909 (RARK…RKRS) and 1917 to 1948 (TVRA…RRRS). 9 tandem repeats follow at residues 1925-1931 (PSRRSRS), 1934-1952 (PSRR…FSIS), 1953-1959 (PSRRSRT), 1960-1966 (PSRRSRT), 1967-1973 (PSRRSRT), 1974-1980 (PSRRSRT), 1981-1987 (PSRRSRT), 1988-1994 (PSRRSRT), and 1995-2013 (PSRR…FSIS). A 7 X 7 AA repeats of P-S-R-R-S-R-[TS] region spans residues 1925-1994 (PSRRSRSHTP…SRTPSRRSRT (70 aa)). A 2 X 19 AA repeats of P-S-R-R-R-R-S-R-S-V-V-R-R-R-S-F-S-I-S region spans residues 1934–2013 (PSRRRRSRSV…VVRRRSFSIS (80 aa)). Serine 1948, serine 1950, and serine 1952 each carry phosphoserine. The span at 1955-2009 (RRSRTPSRRSRTPSRRSRTPSRRSRTPSRRSRTPSRRSRTPSRRRRSRSVVRRRS) shows a compositional bias: basic residues. A phosphoserine mark is found at serine 2009, serine 2011, serine 2013, serine 2029, and serine 2031. The 3 X tandem repeats of [ST]-P-[VLI]-R-[RL]-[RK]-[RF]-S-R stretch occupies residues 2013 to 2039 (SPVRLRRSRTPLRRRFSRSPIRRKRSR). Positions 2016-2038 (RLRRSRTPLRRRFSRSPIRRKRS) are enriched in basic residues. The span at 2039-2054 (RSSERGRSPKRLTDLD) shows a compositional bias: basic and acidic residues. Lysine 2055 carries the N6-acetyllysine; alternate modification. Lysine 2055 is covalently cross-linked (Glycyl lysine isopeptide (Lys-Gly) (interchain with G-Cter in SUMO2); alternate). Lysine 2092 participates in a covalent cross-link: Glycyl lysine isopeptide (Lys-Gly) (interchain with G-Cter in SUMO2). Serine 2129 bears the Phosphoserine mark. A Glycyl lysine isopeptide (Lys-Gly) (interchain with G-Cter in SUMO2) cross-link involves residue lysine 2149. Threonine 2163 is modified (phosphothreonine). The segment at 2200-2220 (KNGEENKDDDNVFSSNLPSEP) is disordered. A Phosphoserine modification is found at serine 2238. Positions 2305–2351 (TGGMGAVLMRKMGWREGEGLGKNKEGNKEPILVDFKTDRKGLVAVGE) constitute a G-patch domain. A DRBM domain is found at 2371–2426 (HPVSALMEICNKRRWQPPEFLLVHDSGPDHRKHFLFRVLRNGALTRPNCMFFLNRY).

As to quaternary structure, interacts with SRSF2. Associates with the spliceosome. Interacts with the AML1-MTG8 (AML1-ETO) fusion protein, possibly leading to trigger signals inhibiting leukemogenesis. Interacts with USH1G. Widely expressed, with the higher expression seen in leukocyte and heart.

The protein localises to the nucleus speckle. Functionally, RNA-binding protein that acts as a mRNA splicing cofactor by promoting efficient splicing of transcripts that possess weak splice sites. Specifically promotes splicing of many cell-cycle and DNA-repair transcripts that possess weak splice sites, such as TUBG1, KATNB1, TUBGCP2, AURKB, PCNT, AKT1, RAD23A, and FANCG. Probably acts by facilitating the interaction between Serine/arginine-rich proteins such as SRSF2 and the RNA polymerase II. Also binds to DNA; binds to the consensus DNA sequence: 5'-GA[GT]AN[CG][AG]CC-3'. May indirectly repress hepatitis B virus (HBV) core promoter activity and transcription of HBV genes and production of HBV virions. Essential for correct RNA splicing of multiple genes critical for brain development, neuronal migration and metabolism, including TUBG1, FLNA, PNKP, WDR62, PSMD3, PCK2, PFKL, IDH2, and ACY1. The chain is Protein SON (SON) from Homo sapiens (Human).